Here is a 126-residue protein sequence, read N- to C-terminus: Large ribosomal subunit protein bL19 (126 aa).

It belongs to the bacterial ribosomal protein bL19 family.

Its function is as follows. This protein is located at the 30S-50S ribosomal subunit interface and may play a role in the structure and function of the aminoacyl-tRNA binding site. The sequence is that of Large ribosomal subunit protein bL19 from Thiobacillus denitrificans (strain ATCC 25259 / T1).